The sequence spans 107 residues: uncharacterized protein (107 aa).

The next 2 membrane-spanning stretches (helical) occupy residues 5 to 25 and 42 to 62; these read WTII…VINV and ILVI…VGIF. Over residues 82-92 the composition is skewed to basic and acidic residues; that stretch reads IHKQEDTHLAD. Residues 82-107 are disordered; that stretch reads IHKQEDTHLADQTDTQDASAMIEKKD.

The protein resides in the cell membrane. This is an uncharacterized protein from Bacillus subtilis (strain 168).